Reading from the N-terminus, the 237-residue chain is CDP-diacylglycerol--serine O-phosphatidyltransferase (237 aa).

Helical transmembrane passes span 3-23 (INPLYLFPNLFTASSIFLGMM), 25-45 (IFYASSYQFVMACWLVVASLI), 73-93 (VVAFGVAPSLITYFYVGYNFG), 95-115 (IGMAVSALFVIFGAIRLARFN), 124-144 (YSFIGIPIPAAAVLVVLCVLL), 150-170 (FLEGNTEKLFLGFIVLLGVLM), 184-204 (WNLKLFILVLIFLSLVFVRPL), and 207-227 (LSVFMGLYLIYGIIRWIFLMV).

It belongs to the CDP-alcohol phosphatidyltransferase class-I family.

The protein localises to the cell membrane. The catalysed reaction is a CDP-1,2-diacyl-sn-glycerol + L-serine = a 1,2-diacyl-sn-glycero-3-phospho-L-serine + CMP + H(+). In Helicobacter pylori (strain J99 / ATCC 700824) (Campylobacter pylori J99), this protein is CDP-diacylglycerol--serine O-phosphatidyltransferase (pssA).